A 159-amino-acid chain; its full sequence is Putative 4-hydroxy-4-methyl-2-oxoglutarate aldolase (159 aa).

Residues 78–81 and Arg-100 each bind substrate; that span reads GDVI. Asp-101 contributes to the a divalent metal cation binding site.

This sequence belongs to the class II aldolase/RraA-like family. Homotrimer. A divalent metal cation serves as cofactor.

It carries out the reaction 4-hydroxy-4-methyl-2-oxoglutarate = 2 pyruvate. The enzyme catalyses oxaloacetate + H(+) = pyruvate + CO2. Functionally, catalyzes the aldol cleavage of 4-hydroxy-4-methyl-2-oxoglutarate (HMG) into 2 molecules of pyruvate. Also contains a secondary oxaloacetate (OAA) decarboxylase activity due to the common pyruvate enolate transition state formed following C-C bond cleavage in the retro-aldol and decarboxylation reactions. The polypeptide is Putative 4-hydroxy-4-methyl-2-oxoglutarate aldolase (Mycobacterium sp. (strain KMS)).